Here is a 305-residue protein sequence, read N- to C-terminus: Putative glutamine--fructose-6-phosphate aminotransferase [isomerizing] (305 aa).

Cysteine 2 (nucleophile; for GATase activity) is an active-site residue. Residues 2–305 (CGIFGYCNFL…RLCITSAVCE (304 aa)) enclose the Glutamine amidotransferase type-2 domain.

The enzyme catalyses D-fructose 6-phosphate + L-glutamine = D-glucosamine 6-phosphate + L-glutamate. Its pathway is nucleotide-sugar biosynthesis; UDP-N-acetyl-alpha-D-glucosamine biosynthesis; alpha-D-glucosamine 6-phosphate from D-fructose 6-phosphate: step 1/1. Functionally, involved in amino sugar synthesis (formation of chitin, supplies the amino sugars of asparagine-linked oligosaccharides of glycoproteins). This Saccharomyces cerevisiae (strain Lalvin EC1118 / Prise de mousse) (Baker's yeast) protein is Putative glutamine--fructose-6-phosphate aminotransferase [isomerizing].